The following is a 322-amino-acid chain: Acetyl-coenzyme A carboxylase carboxyl transferase subunit alpha (322 aa).

In terms of domain architecture, CoA carboxyltransferase C-terminal spans 30-293 (ALDISAEIAR…KQTLQESLRK (264 aa)).

Belongs to the AccA family. As to quaternary structure, acetyl-CoA carboxylase is a heterohexamer composed of biotin carboxyl carrier protein (AccB), biotin carboxylase (AccC) and two subunits each of ACCase subunit alpha (AccA) and ACCase subunit beta (AccD).

The protein resides in the cytoplasm. It catalyses the reaction N(6)-carboxybiotinyl-L-lysyl-[protein] + acetyl-CoA = N(6)-biotinyl-L-lysyl-[protein] + malonyl-CoA. It functions in the pathway lipid metabolism; malonyl-CoA biosynthesis; malonyl-CoA from acetyl-CoA: step 1/1. Its function is as follows. Component of the acetyl coenzyme A carboxylase (ACC) complex. First, biotin carboxylase catalyzes the carboxylation of biotin on its carrier protein (BCCP) and then the CO(2) group is transferred by the carboxyltransferase to acetyl-CoA to form malonyl-CoA. The chain is Acetyl-coenzyme A carboxylase carboxyl transferase subunit alpha from Nitrosomonas europaea (strain ATCC 19718 / CIP 103999 / KCTC 2705 / NBRC 14298).